Consider the following 238-residue polypeptide: Urease accessory protein UreF (238 aa).

The protein belongs to the UreF family. In terms of assembly, ureD, UreF and UreG form a complex that acts as a GTP-hydrolysis-dependent molecular chaperone, activating the urease apoprotein by helping to assemble the nickel containing metallocenter of UreC. The UreE protein probably delivers the nickel.

The protein resides in the cytoplasm. Required for maturation of urease via the functional incorporation of the urease nickel metallocenter. This is Urease accessory protein UreF from Rhodopseudomonas palustris (strain BisA53).